A 372-amino-acid chain; its full sequence is Peptidyl-prolyl cis-trans isomerase D (372 aa).

Positions 14 to 178 constitute a PPIase cyclophilin-type domain; sequence YFDISIGGKS…KEALIVDCGE (165 aa). TPR repeat units follow at residues 219 to 252, 271 to 304, and 309 to 342; these read AKASKDYGNTAFKSGNYSLGLDKYQKGLRYINEE, FSLNNNSALLNIKLEAWDDAARSASAALEVGGVK, and AKAFYRRGLANIHLKDEEAAVRDLTEANKLAPND.

This sequence belongs to the cyclophilin-type PPIase family. PPIase D subfamily.

The protein localises to the cytoplasm. The enzyme catalyses [protein]-peptidylproline (omega=180) = [protein]-peptidylproline (omega=0). In terms of biological role, PPIases accelerate the folding of proteins. It catalyzes the cis-trans isomerization of proline imidic peptide bonds in oligopeptides. The sequence is that of Peptidyl-prolyl cis-trans isomerase D (CPR6) from Gibberella zeae (strain ATCC MYA-4620 / CBS 123657 / FGSC 9075 / NRRL 31084 / PH-1) (Wheat head blight fungus).